The following is a 229-amino-acid chain: Enolase-phosphatase E1 (229 aa).

Belongs to the HAD-like hydrolase superfamily. MasA/MtnC family. Monomer. The cofactor is Mg(2+).

It carries out the reaction 5-methylsulfanyl-2,3-dioxopentyl phosphate + H2O = 1,2-dihydroxy-5-(methylsulfanyl)pent-1-en-3-one + phosphate. It functions in the pathway amino-acid biosynthesis; L-methionine biosynthesis via salvage pathway; L-methionine from S-methyl-5-thio-alpha-D-ribose 1-phosphate: step 3/6. Its pathway is amino-acid biosynthesis; L-methionine biosynthesis via salvage pathway; L-methionine from S-methyl-5-thio-alpha-D-ribose 1-phosphate: step 4/6. Bifunctional enzyme that catalyzes the enolization of 2,3-diketo-5-methylthiopentyl-1-phosphate (DK-MTP-1-P) into the intermediate 2-hydroxy-3-keto-5-methylthiopentenyl-1-phosphate (HK-MTPenyl-1-P), which is then dephosphorylated to form the acireductone 1,2-dihydroxy-3-keto-5-methylthiopentene (DHK-MTPene). The chain is Enolase-phosphatase E1 from Pectobacterium atrosepticum (strain SCRI 1043 / ATCC BAA-672) (Erwinia carotovora subsp. atroseptica).